We begin with the raw amino-acid sequence, 293 residues long: 3-hydroxybutyrate-oligomer hydrolase (293 aa).

It belongs to the AB hydrolase superfamily.

It is found in the cytoplasm. The enzyme catalyses (3R)-hydroxybutanoate pentamer + H2O = (3R)-hydroxybutanoate tetramer + (R)-3-hydroxybutanoate + H(+). It catalyses the reaction (3R)-hydroxybutanoate tetramer + H2O = (3R)-hydroxybutanoate trimer + (R)-3-hydroxybutanoate + H(+). The catalysed reaction is (3R)-hydroxybutanoate trimer + H2O = (3R)-hydroxybutanoate dimer + (R)-3-hydroxybutanoate + H(+). It carries out the reaction (3R)-hydroxybutanoate dimer + H2O = 2 (R)-3-hydroxybutanoate + H(+). The enzyme catalyses [(3R)-hydroxybutanoate](n) + H2O = [(3R)-hydroxybutanoate](n-1) + (R)-3-hydroxybutanoate + H(+). Catalyzes the degradation of various 3-hydroxybutyrate (3HB) oligomers at a high specific activity and artificial amorphous poly(3-hydroxybutyrate) (PHB) at a lower specific activity. Hydrolyzes the 3HB pentamer most efficiently than the tetramer, trimer and dimer. Does not hydrolyze native PHB granules and semicrystalline PHB. Participates in the mobilization of PHB along with other hydrolases. This Cupriavidus necator (strain ATCC 17699 / DSM 428 / KCTC 22496 / NCIMB 10442 / H16 / Stanier 337) (Ralstonia eutropha) protein is 3-hydroxybutyrate-oligomer hydrolase.